We begin with the raw amino-acid sequence, 264 residues long: Taurine import ATP-binding protein TauB (264 aa).

The ABC transporter domain maps to 4–233 (LQLERISAQY…RYAAGESARA (230 aa)). 38–45 (GPSGSGKT) serves as a coordination point for ATP.

Belongs to the ABC transporter superfamily. Taurine importer (TC 3.A.1.17.1) family. As to quaternary structure, the complex is composed of two ATP-binding proteins (TauB), two transmembrane proteins (TauC) and a solute-binding protein (TauA).

It is found in the cell inner membrane. The enzyme catalyses taurine(out) + ATP + H2O = taurine(in) + ADP + phosphate + H(+). Part of the ABC transporter complex TauABC involved in taurine import. Responsible for energy coupling to the transport system. This is Taurine import ATP-binding protein TauB from Pseudomonas fluorescens (strain Pf0-1).